Reading from the N-terminus, the 505-residue chain is Lysine--tRNA ligase (505 aa).

Residues Glu-415 and Glu-422 each coordinate Mg(2+).

The protein belongs to the class-II aminoacyl-tRNA synthetase family. Homodimer. Mg(2+) serves as cofactor.

Its subcellular location is the cytoplasm. The enzyme catalyses tRNA(Lys) + L-lysine + ATP = L-lysyl-tRNA(Lys) + AMP + diphosphate. The protein is Lysine--tRNA ligase of Salmonella typhi.